The chain runs to 548 residues: WEB family protein At1g12150 (548 aa).

Residues 71 to 544 (KEFMKIKQKL…ELQRWRQQEN (474 aa)) are a coiled coil. Residues 430 to 448 (VREEMKMISQKQESKKQDE) are compositionally biased toward basic and acidic residues. A disordered region spans residues 430–455 (VREEMKMISQKQESKKQDEESSGSKI).

Belongs to the WEB family.

This Arabidopsis thaliana (Mouse-ear cress) protein is WEB family protein At1g12150.